The primary structure comprises 1381 residues: EH domain-containing and endocytosis protein 1 (1381 aa).

EH domains follow at residues 14-113 (EQAF…NPAP) and 135-227 (DIAK…IRLE). EF-hand domains are found at residues 47-82 (LPGQ…IAQL) and 167-202 (LPNQ…IQLC). Ca(2+) contacts are provided by D180, D182, S184, and E191. The residue at position 238 (T238) is a Phosphothreonine. Residues S241 and S244 each carry the phosphoserine modification. T245 is subject to Phosphothreonine. Phosphoserine is present on residues S248 and S249. A Phosphothreonine modification is found at T251. At S265 the chain carries Phosphoserine. Residues 276–311 (EKKQQFDAIFDSLDKQHAGSLSSAVLVPFFLSSRLN) enclose the EF-hand 3 domain. Residues 277–366 (KKQQFDAIFD…NELLQSPALG (90 aa)) enclose the EH 3 domain. The segment at 389-535 (SKPSLQDMPH…SSPVKRTAST (147 aa)) is disordered. Composition is skewed to polar residues over residues 404–424 (AVNT…NGSL) and 432–447 (PSFS…TVVQ). Residue S419 is modified to Phosphoserine. Low complexity predominate over residues 448 to 470 (NNTNNSFSYDNNNGQATLQQQQP). A phosphothreonine mark is found at T450, T477, and T487. Residues 477-494 (THSSSGLKKFTPTSNFGQ) are compositionally biased toward polar residues. Phosphoserine is present on S495. Positions 593–882 (GEASAQLSNA…RELSERQMNL (290 aa)) form a coiled coil. Residue K674 forms a Glycyl lysine isopeptide (Lys-Gly) (interchain with G-Cter in ubiquitin) linkage. S848 bears the Phosphoserine mark. The tract at residues 898 to 919 (SASNTDTTTKEATSRGNVHEDT) is disordered. Residues 905-919 (TTKEATSRGNVHEDT) are compositionally biased toward basic and acidic residues. Phosphoserine is present on residues S931, S950, S964, S1008, S1012, and S1020. Disordered stretches follow at residues 933–1202 (LNVN…KDEF), 1214–1285 (VEED…QVSN), and 1298–1322 (SKAE…NDPI). The span at 937-957 (RVKDDEEKTERTESDVFDRDV) shows a compositional bias: basic and acidic residues. Composition is skewed to polar residues over residues 960 to 989 (LGSQ…LTET) and 1005 to 1019 (RSQS…NAPQ). Over residues 1021–1036 (VRDDVELPETLEERDT) the composition is skewed to basic and acidic residues. 2 stretches are compositionally biased toward polar residues: residues 1037-1049 (INNT…TGNL) and 1061-1073 (ATAS…NETT). T1046 carries the post-translational modification Phosphothreonine. A phosphoserine mark is found at S1069, S1087, S1093, S1095, S1096, and S1100. Residues 1093–1103 (SVSSIQESPKI) are compositionally biased toward polar residues. Position 1111 is a phosphothreonine (T1111). Residues 1127 to 1139 (SDSSSSDDDEFED) are compositionally biased toward acidic residues. 2 stretches are compositionally biased toward polar residues: residues 1147–1164 (TVKT…SSLE) and 1178–1195 (TSPS…TNSI). Phosphoserine occurs at positions 1181 and 1187. Positions 1214-1226 (VEEDNGADSESEF) are enriched in acidic residues. Residues 1217–1381 (DNGADSESEF…AATNFLLDSA (165 aa)) are able to bind biological membranes. A compositionally biased stretch (polar residues) spans 1253–1285 (NAFTGTLTSSSNPTIPKPQVQQQSTSDPAQVSN). T1307 bears the Phosphothreonine mark. Residue K1329 forms a Glycyl lysine isopeptide (Lys-Gly) (interchain with G-Cter in ubiquitin) linkage. One can recognise a UBA domain in the interval 1338 to 1380 (ATTPKSLAVEELSGMGFTEEEAHNALEKCNWDLEAATNFLLDS). Residue S1343 is modified to Phosphoserine.

It belongs to the VDP/USO1/EDE1 family. As to quaternary structure, interacts (via UBA domain) with monoubiquitin and ENT1 (via asparagine-proline-phenylalanine tripeptide motif called NPF). Interacts with PAL1 and SYP1.

It localises to the cytoplasm. Its function is as follows. Functions at the internalization step of the clathrin-mediated endocytosis (CME) as an early-acting scaffold protein. Requires clathrin adapter proteins, ENT1/2 and YAP1801/2, for normal spatiotemporal dynamics and viability. Binds to biological membranes in a ubiquitin-dependent manner. The sequence is that of EH domain-containing and endocytosis protein 1 (EDE1) from Saccharomyces cerevisiae (strain ATCC 204508 / S288c) (Baker's yeast).